We begin with the raw amino-acid sequence, 181 residues long: Akirin-2 (181 aa).

The tract at residues 18-48 (SPAASPKRRRCAPLSPSGPSPQKYLRLEPSP) is disordered. A Nuclear localization signal motif is present at residues 23-28 (PKRRRC). The SYVS motif signature appears at 178–181 (SYVS).

The protein belongs to the akirin family. In terms of assembly, homodimer. Interacts with actl6a/baf53a. Interacts with gmnn.

The protein localises to the nucleus. In terms of biological role, molecular adapter that acts as a bridge between a variety of multiprotein complexes, and which is involved in embryonic development, immunity, myogenesis and brain development. Plays a key role in nuclear protein degradation by promoting import of proteasomes into the nucleus: acts by bridging fully assembled 20S proteasomes with nuclear import receptor ipo9. Involved in both neural precursor maintenance and terminal neural differentiation: bridges gmnn and actl6a/baf53a in neural progenitor cells, antagonizing the activity of gmnn, thereby suppressing sox2 expression. Also required for proper activation of neurod1 and neuronal differentiation. Involved in myogenesis: required for skeletal muscle formation and skeletal development, possibly by regulating expression of muscle differentiation factors. The chain is Akirin-2 from Xenopus laevis (African clawed frog).